A 251-amino-acid chain; its full sequence is 1-(5-phosphoribosyl)-5-[(5-phosphoribosylamino)methylideneamino] imidazole-4-carboxamide isomerase (251 aa).

Aspartate 8 acts as the Proton acceptor in catalysis. Aspartate 131 serves as the catalytic Proton donor.

This sequence belongs to the HisA/HisF family.

It is found in the cytoplasm. It catalyses the reaction 1-(5-phospho-beta-D-ribosyl)-5-[(5-phospho-beta-D-ribosylamino)methylideneamino]imidazole-4-carboxamide = 5-[(5-phospho-1-deoxy-D-ribulos-1-ylimino)methylamino]-1-(5-phospho-beta-D-ribosyl)imidazole-4-carboxamide. The protein operates within amino-acid biosynthesis; L-histidine biosynthesis; L-histidine from 5-phospho-alpha-D-ribose 1-diphosphate: step 4/9. In Azoarcus sp. (strain BH72), this protein is 1-(5-phosphoribosyl)-5-[(5-phosphoribosylamino)methylideneamino] imidazole-4-carboxamide isomerase.